The following is a 388-amino-acid chain: LL-diaminopimelate aminotransferase (388 aa).

Substrate contacts are provided by Tyr-16 and Gly-41. Pyridoxal 5'-phosphate-binding positions include Tyr-70, 104–105, Tyr-129, Asn-179, Tyr-210, and 239–241; these read SK and SLS. Substrate contacts are provided by Lys-105, Tyr-129, and Asn-179. N6-(pyridoxal phosphate)lysine is present on Lys-242. Arg-250 is a binding site for pyridoxal 5'-phosphate. A substrate-binding site is contributed by Arg-368.

It belongs to the class-I pyridoxal-phosphate-dependent aminotransferase family. LL-diaminopimelate aminotransferase subfamily. Homodimer. Requires pyridoxal 5'-phosphate as cofactor.

It catalyses the reaction (2S,6S)-2,6-diaminopimelate + 2-oxoglutarate = (S)-2,3,4,5-tetrahydrodipicolinate + L-glutamate + H2O + H(+). It participates in amino-acid biosynthesis; L-lysine biosynthesis via DAP pathway; LL-2,6-diaminopimelate from (S)-tetrahydrodipicolinate (aminotransferase route): step 1/1. Functionally, involved in the synthesis of meso-diaminopimelate (m-DAP or DL-DAP), required for both lysine and peptidoglycan biosynthesis. Catalyzes the direct conversion of tetrahydrodipicolinate to LL-diaminopimelate. The polypeptide is LL-diaminopimelate aminotransferase (Nitratidesulfovibrio vulgaris (strain DP4) (Desulfovibrio vulgaris)).